We begin with the raw amino-acid sequence, 280 residues long: Dexamethasone-induced Ras-related protein 1 (280 aa).

Cysteine 11 is modified (S-nitrosocysteine). 31 to 38 (GSSKVGKT) serves as a coordination point for GTP. The short motif at 53–61 (YTPTIEDFH) is the Effector region element. Residues 78 to 82 (DTSGN) and 145 to 148 (NKGD) each bind GTP. At cysteine 277 the chain carries Cysteine methyl ester. The S-farnesyl cysteine moiety is linked to residue cysteine 277. Positions 278-280 (VIS) are cleaved as a propeptide — removed in mature form.

It belongs to the small GTPase superfamily. RasD family. Component of a complex, at least composed of APBB1, RASD1/DEXRAS1 and APP. Interacts with APBB1/FE65. Forms a ternary complex with CAPON and NOS1. In terms of processing, S-nitrosylation stimulates guanine-nucleotide exchange activity. Expressed in brain, heart, kidney and liver.

Its subcellular location is the cell membrane. It localises to the cytoplasm. The protein resides in the perinuclear region. The protein localises to the nucleus. Small GTPase. Negatively regulates the transcription regulation activity of the APBB1/FE65-APP complex via its interaction with APBB1/FE65. This chain is Dexamethasone-induced Ras-related protein 1 (Rasd1), found in Mus musculus (Mouse).